A 75-amino-acid chain; its full sequence is Large ribosomal subunit protein bL32c (75 aa).

A disordered region spans residues 49-75; the sequence is SPGPTTPIKPNPKKQTGRRPRSQRRRT. Positions 59–75 are enriched in basic residues; sequence NPKKQTGRRPRSQRRRT.

This sequence belongs to the bacterial ribosomal protein bL32 family.

Its subcellular location is the plastid. It localises to the chloroplast. In Nephroselmis olivacea (Green alga), this protein is Large ribosomal subunit protein bL32c.